The primary structure comprises 87 residues: U3-theraphotoxin-Hhn1a 7 (87 aa).

Positions 1–24 are cleaved as a signal peptide; sequence MVNMKASMFLTFAGLVLLFVVSYA. Residues 25-52 constitute a propeptide that is removed on maturation; sequence SESEEKEFPKEMLSSIFAVDNDFKQEER. Intrachain disulfides connect C54/C67, C61/C72, and C66/C79.

The protein belongs to the neurotoxin 10 (Hwtx-1) family. 51 (Hntx-8) subfamily. Hntx-8 sub-subfamily. Expressed by the venom gland.

The protein localises to the secreted. In terms of biological role, ion channel inhibitor. This is U3-theraphotoxin-Hhn1a 7 from Cyriopagopus hainanus (Chinese bird spider).